The following is a 457-amino-acid chain: uncharacterized protein (457 aa).

A signal peptide spans 1 to 18 (MKLLISLLWSIFFSIVYS). Over 19-173 (EKTLLNFKHY…GGLPASQFPR (155 aa)) the chain is Lumenal. The helical transmembrane segment at 174–194 (MPISGGITIAYSVILALWMFF) threads the bilayer. The Cytoplasmic segment spans residues 195 to 207 (RFQYKHSIVTVQK). Residues 208–228 (AIMFLLIFSCAQQAVTSIVLD) form a helical membrane-spanning segment. At 229–243 (TENLRNRGNFTWLGE) the chain is on the lumenal side. Residues 244-264 (TLVSILFACQLVLDLALLLIL) traverse the membrane as a helical segment. Over 265–284 (SWGYTRYSTNMRDRLFTEAK) the chain is Cytoplasmic. The helical transmembrane segment at 285-305 (IPLIICFFALFVVRFFAITIQ) threads the bilayer. Residues 306–314 (SIHLGLWFC) lie on the Lumenal side of the membrane. A helical membrane pass occupies residues 315 to 335 (FFFLTACISALYILFGAFVAL). Residues 336–358 (PSTLRALVEQRYYTLHSIYKIFR) are Cytoplasmic-facing. The helical transmembrane segment at 359–379 (IMVLCGVVTIFSFSLVALIFC) threads the bilayer. At 380–457 (SNTNNNSTNK…EEDIRADKSK (78 aa)) the chain is on the lumenal side.

The protein belongs to the LU7TM family.

Its subcellular location is the endoplasmic reticulum membrane. This is an uncharacterized protein from Schizosaccharomyces pombe (strain 972 / ATCC 24843) (Fission yeast).